The chain runs to 330 residues: Olfactory receptor 1P1 (330 aa).

The Extracellular segment spans residues 1-39 (MGLTQDFFPPTSELLEGGNQTSTFEFLLWGLSDQPQQQH). Asn19 carries N-linked (GlcNAc...) asparagine glycosylation. A helical membrane pass occupies residues 40–60 (IFFLLFLWMYVVTVAGNLLIV). Over 61-71 (LAIGTDTHLHT) the chain is Cytoplasmic. A helical membrane pass occupies residues 72 to 92 (PMYFFLASLSCADIFSTSTTV). Residues 93–111 (PKALVNIQTQSRSISYAGC) lie on the Extracellular side of the membrane. An intrachain disulfide couples Cys111 to Cys192. A helical membrane pass occupies residues 112-132 (LAQLYFFLTFGDMDIFLPATM). The Cytoplasmic segment spans residues 133-137 (AYDRY). A helical transmembrane segment spans residues 138 to 158 (VAICHLLHYMMIMSLHRCAFL). Residues 159–209 (VTACWTLTSLLAMTRTFLIFRLSLCSKILPGFFCDLGPLMKVSCSDAQVNE) lie on the Extracellular side of the membrane. A helical transmembrane segment spans residues 210-230 (LVLLFLGGAVILIPFMLILVS). Over 231 to 257 (YIRIVSAILRAPSAQGRRKAFSTCDSH) the chain is Cytoplasmic. A helical membrane pass occupies residues 258–278 (LVVVALFFGTVIRAYLCPSSS). Residues 279–286 (SSNSVKED) lie on the Extracellular side of the membrane. A helical membrane pass occupies residues 287-307 (TAAAVMYTVVTPLLNPFIYSM). Topologically, residues 308–330 (RNKDMKAAVVRLLKGRVSFSQGQ) are cytoplasmic.

The protein belongs to the G-protein coupled receptor 1 family.

It localises to the cell membrane. In terms of biological role, odorant receptor. The protein is Olfactory receptor 1P1 (OR1P1) of Homo sapiens (Human).